Here is a 642-residue protein sequence, read N- to C-terminus: DNA primase (642 aa).

The segment at C41–C65 adopts a CHC2-type zinc-finger fold. Positions H262–A348 constitute a Toprim domain. Mg(2+)-binding residues include E268, D319, and D321. The segment at N445–P480 is disordered.

The protein belongs to the DnaG primase family. In terms of assembly, monomer. Interacts with DnaB. The cofactor is Zn(2+). Requires Mg(2+) as cofactor.

It carries out the reaction ssDNA + n NTP = ssDNA/pppN(pN)n-1 hybrid + (n-1) diphosphate.. Its function is as follows. RNA polymerase that catalyzes the synthesis of short RNA molecules used as primers for DNA polymerase during DNA replication. This is DNA primase from Mycobacterium leprae (strain TN).